Reading from the N-terminus, the 279-residue chain is NADPH-dependent 7-cyano-7-deazaguanine reductase (279 aa).

A substrate-binding site is contributed by 86–88 (IES). 88–89 (SK) is an NADPH binding site. Cys-187 functions as the Thioimide intermediate in the catalytic mechanism. Asp-194 functions as the Proton donor in the catalytic mechanism. Substrate is bound at residue 226-227 (HE). 255–256 (RG) provides a ligand contact to NADPH.

This sequence belongs to the GTP cyclohydrolase I family. QueF type 2 subfamily. As to quaternary structure, homodimer.

The protein localises to the cytoplasm. It carries out the reaction 7-aminomethyl-7-carbaguanine + 2 NADP(+) = 7-cyano-7-deazaguanine + 2 NADPH + 3 H(+). The protein operates within tRNA modification; tRNA-queuosine biosynthesis. Catalyzes the NADPH-dependent reduction of 7-cyano-7-deazaguanine (preQ0) to 7-aminomethyl-7-deazaguanine (preQ1). This is NADPH-dependent 7-cyano-7-deazaguanine reductase from Haemophilus influenzae (strain PittEE).